We begin with the raw amino-acid sequence, 216 residues long: Probable transaldolase (216 aa).

Catalysis depends on Lys-84, which acts as the Schiff-base intermediate with substrate.

This sequence belongs to the transaldolase family. Type 3B subfamily.

It is found in the cytoplasm. It carries out the reaction D-sedoheptulose 7-phosphate + D-glyceraldehyde 3-phosphate = D-erythrose 4-phosphate + beta-D-fructose 6-phosphate. It functions in the pathway carbohydrate degradation; pentose phosphate pathway; D-glyceraldehyde 3-phosphate and beta-D-fructose 6-phosphate from D-ribose 5-phosphate and D-xylulose 5-phosphate (non-oxidative stage): step 2/3. In terms of biological role, transaldolase is important for the balance of metabolites in the pentose-phosphate pathway. The polypeptide is Probable transaldolase (Exiguobacterium sp. (strain ATCC BAA-1283 / AT1b)).